The sequence spans 726 residues: Long-chain-alcohol oxidase FAO4A (726 aa).

A helical transmembrane segment spans residues 103-119 (ILLNWSSSYFSLLRMLF). FAD is bound at residue 224-239 (CDAVVVGSGSGGGVAA). His659 serves as the catalytic Proton acceptor.

This sequence belongs to the GMC oxidoreductase family.

It is found in the membrane. The enzyme catalyses a long-chain primary fatty alcohol + O2 = a long-chain fatty aldehyde + H2O2. In terms of biological role, long-chain fatty alcohol oxidase involved in the omega-oxidation pathway of lipid degradation. The chain is Long-chain-alcohol oxidase FAO4A (FAO4A) from Arabidopsis thaliana (Mouse-ear cress).